Consider the following 29-residue polypeptide: Cytochrome b6-f complex subunit 8 (29 aa).

Residues 3–23 (IVSLAWAALMVVFTFSLSLVV) form a helical membrane-spanning segment.

The protein belongs to the PetN family. The 4 large subunits of the cytochrome b6-f complex are cytochrome b6, subunit IV (17 kDa polypeptide, PetD), cytochrome f and the Rieske protein, while the 4 small subunits are PetG, PetL, PetM and PetN. The complex functions as a dimer.

The protein resides in the plastid. Its subcellular location is the chloroplast thylakoid membrane. Functionally, component of the cytochrome b6-f complex, which mediates electron transfer between photosystem II (PSII) and photosystem I (PSI), cyclic electron flow around PSI, and state transitions. This Solanum bulbocastanum (Wild potato) protein is Cytochrome b6-f complex subunit 8.